Here is a 64-residue protein sequence, read N- to C-terminus: Conotoxin reg3.16 (64 aa).

The signal sequence occupies residues methionine 1 to alanine 19. A propeptide spanning residues leucine 20–threonine 49 is cleaved from the precursor. 3 cysteine pairs are disulfide-bonded: cysteine 50/cysteine 64, cysteine 51/cysteine 60, and cysteine 56/cysteine 63.

It belongs to the conotoxin M superfamily. As to expression, expressed by the venom duct.

It is found in the secreted. This Conus regius (Crown cone) protein is Conotoxin reg3.16.